A 187-amino-acid chain; its full sequence is Ribosome maturation factor RimM (187 aa).

One can recognise a PRC barrel domain in the interval 95–178; it reads DEDEFFYADL…GLVEDKDESL (84 aa).

Belongs to the RimM family. In terms of assembly, binds ribosomal protein uS19.

Its subcellular location is the cytoplasm. In terms of biological role, an accessory protein needed during the final step in the assembly of 30S ribosomal subunit, possibly for assembly of the head region. Essential for efficient processing of 16S rRNA. May be needed both before and after RbfA during the maturation of 16S rRNA. It has affinity for free ribosomal 30S subunits but not for 70S ribosomes. The chain is Ribosome maturation factor RimM from Sinorhizobium fredii (strain NBRC 101917 / NGR234).